The following is a 145-amino-acid chain: Large ribosomal subunit protein uL13 (145 aa).

Belongs to the universal ribosomal protein uL13 family. In terms of assembly, part of the 50S ribosomal subunit. Interacts weakly with proteins L3 and L6.

In terms of biological role, this protein is one of the early assembly proteins of the 50S ribosomal subunit. Binds to 23S rRNA. The polypeptide is Large ribosomal subunit protein uL13 (Haloarcula marismortui (strain ATCC 43049 / DSM 3752 / JCM 8966 / VKM B-1809) (Halobacterium marismortui)).